Here is a 764-residue protein sequence, read N- to C-terminus: Phenylalanine--tRNA ligase beta subunit (764 aa).

The region spanning 38 to 148 (CIAPKNVVVG…GELVLGKELN (111 aa)) is the tRNA-binding domain. The B5 domain occupies 375-455 (LKDRTLTFQL…RFVGIDNLVS (81 aa)). Asp-433, Asp-439, Glu-442, and Glu-443 together coordinate Mg(2+). The 91-residue stretch at 673-763 (SIYPSSVRDL…LEKEFNARLK (91 aa)) folds into the FDX-ACB domain.

The protein belongs to the phenylalanyl-tRNA synthetase beta subunit family. Type 1 subfamily. As to quaternary structure, tetramer of two alpha and two beta subunits. Mg(2+) serves as cofactor.

The protein localises to the cytoplasm. The enzyme catalyses tRNA(Phe) + L-phenylalanine + ATP = L-phenylalanyl-tRNA(Phe) + AMP + diphosphate + H(+). The polypeptide is Phenylalanine--tRNA ligase beta subunit (pheT) (Helicobacter pylori (strain ATCC 700392 / 26695) (Campylobacter pylori)).